Here is a 68-residue protein sequence, read N- to C-terminus: Putative membrane protein insertion efficiency factor (68 aa).

This sequence belongs to the UPF0161 family.

Its subcellular location is the cell inner membrane. In terms of biological role, could be involved in insertion of integral membrane proteins into the membrane. The sequence is that of Putative membrane protein insertion efficiency factor from Hydrogenobaculum sp. (strain Y04AAS1).